A 142-amino-acid polypeptide reads, in one-letter code: Small ribosomal subunit protein bS6 (142 aa).

Basic and acidic residues predominate over residues 110-133; that stretch reads NKKPSHAKEKHEKTEHTHSHHTEE. The disordered stretch occupies residues 110–142; that stretch reads NKKPSHAKEKHEKTEHTHSHHTEEAESVGSHSE.

Belongs to the bacterial ribosomal protein bS6 family.

Functionally, binds together with bS18 to 16S ribosomal RNA. The chain is Small ribosomal subunit protein bS6 (rpsF) from Helicobacter pylori (strain ATCC 700392 / 26695) (Campylobacter pylori).